A 202-amino-acid polypeptide reads, in one-letter code: MKKLLLIIGIISLMTSMSMCLNNNNLNNLDLKKSILVEVNGTPIEIPLRATVGEAKEVKLINTTDREIYNYYHSKILIYIKGDMNISVKEGGVSIVDLVTKLEWFNQFYPHNIVVELNRTNSTVTVKSIFANGKTSITELKVNESEYLMHNNKTMVIEILKTHNTATITKINNTFIIEGNSLKELDNAETRFVIDMFKGSIT.

This is an uncharacterized protein from Methanocaldococcus jannaschii (strain ATCC 43067 / DSM 2661 / JAL-1 / JCM 10045 / NBRC 100440) (Methanococcus jannaschii).